The chain runs to 343 residues: Flavone 3'-O-methyltransferase OMT1 (343 aa).

A (E)-ferulate-binding site is contributed by Asn-107. S-adenosyl-L-homocysteine-binding residues include Gly-184, Asp-207, Asp-227, Met-228, Met-240, and Lys-241. His-245 functions as the Proton acceptor in the catalytic mechanism. Asp-246 serves as a coordination point for (E)-5-hydroxyferulate. Active-site residues include Glu-273 and Glu-305.

Belongs to the class I-like SAM-binding methyltransferase superfamily. Cation-independent O-methyltransferase family. COMT subfamily. In terms of assembly, homodimer.

The catalysed reaction is (E)-5-hydroxyferulate + S-adenosyl-L-methionine = (E)-sinapate + S-adenosyl-L-homocysteine + H(+). It catalyses the reaction luteolin + S-adenosyl-L-methionine = chrysoeriol + S-adenosyl-L-homocysteine + H(+). It carries out the reaction quercetin + S-adenosyl-L-methionine = isorhamnetin + S-adenosyl-L-homocysteine + H(+). The enzyme catalyses (E)-caffeate + S-adenosyl-L-methionine = (E)-ferulate + S-adenosyl-L-homocysteine + H(+). The catalysed reaction is a 3'-hydroxyflavone + S-adenosyl-L-methionine = a 3'-methoxyflavone + S-adenosyl-L-homocysteine + H(+). Its pathway is flavonoid metabolism. Catalyzes the 3'-O-methylation of the flavonoids luteolin and quercetin. Catalyzes the 3- of 5-O-methylation of the phenylpropanoids caffeate and 5-hydroxyferulate. Substrate preference is 5-hydroxyferulate &gt; luteolin &gt; quercetin &gt; caffeate. Apigenin, kempferol and 3,4-dimethylquercetin do not seem to be substrates for methylation. This Chrysosplenium americanum (American golden saxifrage) protein is Flavone 3'-O-methyltransferase OMT1.